We begin with the raw amino-acid sequence, 395 residues long: 8-amino-7-oxononanoate synthase/2-amino-3-ketobutyrate coenzyme A ligase (395 aa).

Pyridoxal 5'-phosphate is bound at residue 110–111 (GF). Position 135 (H135) interacts with substrate. Pyridoxal 5'-phosphate-binding positions include S182, 207–210 (DDAH), and 239–242 (TLSK). Position 242 is an N6-(pyridoxal phosphate)lysine (K242). T356 serves as a coordination point for substrate.

Belongs to the class-II pyridoxal-phosphate-dependent aminotransferase family. As to quaternary structure, homodimer. It depends on pyridoxal 5'-phosphate as a cofactor.

It catalyses the reaction 6-carboxyhexanoyl-[ACP] + L-alanine + H(+) = (8S)-8-amino-7-oxononanoate + holo-[ACP] + CO2. It carries out the reaction glycine + acetyl-CoA = (2S)-2-amino-3-oxobutanoate + CoA. Its pathway is cofactor biosynthesis; biotin biosynthesis. Catalyzes the decarboxylative condensation of pimeloyl-[acyl-carrier protein] and L-alanine to produce 8-amino-7-oxononanoate (AON), [acyl-carrier protein], and carbon dioxide. Can also use pimeloyl-CoA instead of pimeloyl-ACP as substrate. It also converts 2-amino-3-ketobutyrate and CoA to glycine and acetyl-CoA. Activity is also observed with the following combinations of substrates: acetyl-CoA and either L-alanine or L-serine, pimeloyl-CoA and either glycine or L-serine, and palmitoyl-CoA with L-alanine. The protein is 8-amino-7-oxononanoate synthase/2-amino-3-ketobutyrate coenzyme A ligase of Thermus thermophilus (strain ATCC 27634 / DSM 579 / HB8).